A 1021-amino-acid chain; its full sequence is Sodium/potassium-transporting ATPase subunit alpha-1 (1021 aa).

The propeptide occupies 1–5 (MGKGV). A compositionally biased stretch (basic and acidic residues) spans 1–11 (MGKGVGRDKYE). The tract at residues 1–37 (MGKGVGRDKYEPAAVSEHGDKKKAKKERDMDELKKEV) is disordered. Residues 6-85 (GRDKYEPAAV…NALTPPPTTP (80 aa)) are Cytoplasmic-facing. Position 9 is an N6-acetyllysine (K9). Phosphotyrosine is present on Y10. Residue S16 is modified to Phosphoserine; by PKC. K21 carries the N6-acetyllysine modification. Positions 26–37 (KERDMDELKKEV) are enriched in basic and acidic residues. Residues S38 and S45 each carry the phosphoserine modification. The interval 80-82 (PPP) is phosphoinositide-3 kinase binding. The helical transmembrane segment at 86-106 (EWVKFCRQLFGGFSMLLWIGA) threads the bilayer. Topologically, residues 107–129 (ILCFLAYGIQAATEEEPQNDNLY) are extracellular. Residues 130–150 (LGVVLSAVVIITGCFSYYQEA) traverse the membrane as a helical segment. Residues 151 to 286 (KSSKIMESFK…GGQTPIAAEI (136 aa)) lie on the Cytoplasmic side of the membrane. The disordered stretch occupies residues 214-233 (SSLTGESEPQTRSPDFTNEN). Phosphoserine is present on S226. The residue at position 258 (Y258) is a Phosphotyrosine. Residues 287-306 (EHFIHIITGVAVFLGVSFFI) traverse the membrane as a helical segment. Residues 307 to 318 (LSLILEYTWLEA) are Extracellular-facing. A helical transmembrane segment spans residues 319–336 (VIFLIGIIVANVPEGLLA). At 337–770 (TVTVCLTLTA…EEGRLIFDNL (434 aa)) the chain is on the cytoplasmic side. D374 functions as the 4-aspartylphosphate intermediate in the catalytic mechanism. S450 and S482 each carry phosphoserine. K485 contacts ATP. Phosphotyrosine is present on Y540. The segment at 594 to 715 (RAAVPDAVGK…QGAIVAVTGD (122 aa)) is mediates interaction with SCN7A. Residue K659 is modified to N6-succinyllysine. S666 and S673 each carry phosphoserine. Residues D715 and D719 each coordinate Mg(2+). The chain crosses the membrane as a helical span at residues 771-790 (KKSIAYTLTSNIPEITPFLI). Topologically, residues 791–800 (FIIANIPLPL) are extracellular. The helical transmembrane segment at 801–821 (GTVTILCIDLGTDMVPAISLA) threads the bilayer. Over 822-841 (YEQAESDIMKRQPRNPKTDK) the chain is Cytoplasmic. The chain crosses the membrane as a helical span at residues 842–864 (LVNEQLISMAYGQIGMIQALGGF). Residues 865-916 (FTYFVILAENGFLPIHLLGLRVNWDDRWINDVEDSYGQQWTYEQRKIVEFTC) lie on the Extracellular side of the membrane. A helical membrane pass occupies residues 917-936 (HTPFFVTIVVVQWADLVICK). The Cytoplasmic portion of the chain corresponds to 937-949 (TRRNSVFQQGMKN). S941 is subject to Phosphoserine; by PKA. Residues 950–968 (KILIFGLFEETALAAFLSY) traverse the membrane as a helical segment. Residues 969 to 983 (CPGMGVALRMYPLKP) lie on the Extracellular side of the membrane. The chain crosses the membrane as a helical span at residues 984–1004 (TWWFCAFPYSLLIFVYDEVRK). Residues 1005-1021 (LIIRRRPGGWVEKETYY) lie on the Cytoplasmic side of the membrane.

Belongs to the cation transport ATPase (P-type) (TC 3.A.3) family. Type IIC subfamily. The sodium/potassium-transporting ATPase is composed of a catalytic alpha subunit, an auxiliary non-catalytic beta subunit and an additional regulatory subunit. Interacts with regulatory subunit FXYD1. Interacts with regulatory subunit FXYD3. Interacts with SIK1. Interacts with SLC35G1 and STIM1. Interacts with CLN3; this interaction regulates the sodium/potassium-transporting ATPase complex localization at the plasma membrane. Interacts with SCN7A; activates ATP1A1 P-type sodium:potassium-exchanging transporter activity which indirectly signals to nearby neurons to regulate sodium homeostasis. In terms of processing, phosphorylation on Tyr-10 modulates pumping activity. Phosphorylation of Ser-941 by PKA modulates the response of ATP1A1 to PKC. Dephosphorylation by protein phosphatase 2A (PP2A) following increases in intracellular sodium, leading to increase catalytic activity.

Its subcellular location is the cell membrane. The protein resides in the basolateral cell membrane. It localises to the sarcolemma. It is found in the cell projection. The protein localises to the axon. Its subcellular location is the melanosome. It carries out the reaction K(+)(out) + Na(+)(in) + ATP + H2O = K(+)(in) + Na(+)(out) + ADP + phosphate + H(+). Its function is as follows. This is the catalytic component of the active enzyme, which catalyzes the hydrolysis of ATP coupled with the exchange of sodium and potassium ions across the plasma membrane. This action creates the electrochemical gradient of sodium and potassium ions, providing the energy for active transport of various nutrients. Could also be part of an osmosensory signaling pathway that senses body-fluid sodium levels and controls salt intake behavior as well as voluntary water intake to regulate sodium homeostasis. In Sus scrofa (Pig), this protein is Sodium/potassium-transporting ATPase subunit alpha-1 (ATP1A1).